Consider the following 433-residue polypeptide: 23S rRNA (uracil(1939)-C(5))-methyltransferase RlmD (433 aa).

Residues 10-68 (RTTTRQIITVSVNDLDSFGQGVARHNGKTLFIPGLLPQENAEVAVTEDKKQYARAKVVR) form the TRAM domain. 4 residues coordinate [4Fe-4S] cluster: Cys-81, Cys-87, Cys-90, and Cys-162. Residues Gln-265, Phe-294, Asn-299, Glu-315, Asn-342, and Asp-363 each coordinate S-adenosyl-L-methionine. The active-site Nucleophile is the Cys-389.

This sequence belongs to the class I-like SAM-binding methyltransferase superfamily. RNA M5U methyltransferase family. RlmD subfamily.

It carries out the reaction uridine(1939) in 23S rRNA + S-adenosyl-L-methionine = 5-methyluridine(1939) in 23S rRNA + S-adenosyl-L-homocysteine + H(+). Functionally, catalyzes the formation of 5-methyl-uridine at position 1939 (m5U1939) in 23S rRNA. This is 23S rRNA (uracil(1939)-C(5))-methyltransferase RlmD from Shigella flexneri serotype 5b (strain 8401).